A 288-amino-acid polypeptide reads, in one-letter code: Aminoglycoside 6-adenylyltransferase (288 aa).

It catalyses the reaction streptomycin + ATP = 6-O-adenylylstreptomycin + diphosphate. Functionally, mediates bacterial resistance to streptomycin, is probably a streptomycin 6-adenylyltransferase. The protein is Aminoglycoside 6-adenylyltransferase of Campylobacter jejuni.